Consider the following 1851-residue polypeptide: MFKCIPIFKGCNRQVEFVDKRHCSLPQVPEEILRYSRTLEELFLDANHIRDLPKNFFRLHRLRKLGLSDNEIGRLPPDIQNFENLVELDVSRNDIPDIPDDIKHLQSLQVADFSSNPIPKLPSGFSQLKNLTVLGLNDMSLTTLPADFGSLTQLESLELRENLLKHLPETISQLTKLKRLDLGDNEIEDLPPYLGYLPGLHELWLDHNQLQRLPPELGLLTKLTYLDVSENRLEELPNEISGLVSLTDLDLAQNLLEALPDGIAKLSRLTILKLDQNRLQRLNDTLGNCENMQELILTENFLSELPASIGQMTKLNNLNVDRNALEYLPLEIGQCANLGVLSLRDNKLKKLPPELGNCTVLHVLDVSGNQLLYLPYSLVNLQLKAVWLSENQSQPLLTFQPDTDAETGEQVLSCYLLPQQEYQPITPARDLESDSEPFEEREPSRTVVKFSEEATQEKETPFVRQNTPHPKDLKAKAQKLKVERSRNEEHANLVTLPEENGTKLAETPTETRTIANNHQQQPHPVQQPIVGVNSKQPVVVGVVTPTTTTVAPTGVQGGSEGASSTANNVKAATAAVVAELAATVGGSDEVQDDDEQEDEFESDRRVGFQVEGEDDDFYKRPPKLHRRDTPHHLKNKRVQHLTDKQASEILANALASQERNDTTPQHSLSGKVTSPIEEEEQLEVEQEQQQQQQQHPFDSSLSPISAGKTAEASTDPDNLDGVTELRLEQYEIHIERTAAGLGLSIAGGKGSTPFKGDDDGIFISRVTEAGPADLAGLKVGDKVIKVNGIVVVDADHYQAVQVLKACGAVLVLVVQREVTRLIGHPVFSEDGSVSQISVETRPLVADAPPAASISHERYIPAPIEIVPQQQHLQQQQQQPIQQVAPTHSYSGNVFATPTAAQTVQPAVSAAPNGLLLNGREAPLSYIQLHTTLIRDQIGQGLGFSIAGGKGSPPFKDDCDGIFISRITEGGLAYRDGKIMVGDRVMAINGNDMTEAHHDAAVACLTEPQRFVRLVLQREYRGPLEPPTSPRSPAVLNSLSPSGYLANRPANFSRSVVEVEQPYKYNTLATTTPTPKPTVPASISNNNNTLPSSKTNGFATAAAATIDSSTGQPVPAPRRTNSVPMGDGDIGAGSTTSGDSGEAQPSSLRPLTSDDFQAMIPAHFLSGGSQHQVHVARPNEVGVSAVTVNVNKPQPDLPMFPAAPTELGRVTETITKSTFTETVMTRITDNQLAEPLISEEVVLPKNQGSLGFSIIGGTDHSCVPFGTREPGIFISHIVPGGIASKCGKLRMGDRILKVNEADVSKATHQDAVLELLKPGDEIKLTIQHDPLPPGFQEVLLSKAEGERLGMHIKGGLNGQRGNPADPSDEGVFVSKINSVGAARRDGRLKVGMRLLEVNGHSLLGASHQDAVNVLRNAGNEIQLVVCKGYDKSNLIHSIGQAGGMSTGFNSSASCSGGSRQGSRASETGSELSQSQSVSSLDHEEDERLRQDFDVFASQKPDAQQPTGPSVLAAAAAMVHGASSPTPPAATSNITPLPTAAAVASADLTAPDTPATQTVALIHAEQQAHQQQQQTQLAPLGQEKSTQEKVLEIVRAADAFTTVPPKSPSEHHEQDKIQKTTTVVISKHTLDTNPTTPTTPAAPLSIAGAESANSAGAPSPAVPASTPGSAPVLPAVAVQTQTQTTSTEKDEEEESQLQSTPASRDGAEEQQEEVRAKPTPTKVPKSVSDKKRFFESAMEDQHKPTQKTDKVFSFLSKDEVEKLRQEEERKIATLRRDKNSRLLDAANDNIDKDAAQQRTKSNSNSSSGDDNDDSDQEEGIARGDSVDNAALGHFDDAEDMRNPLDEIEAVFRS.

16 LRR repeats span residues 38–59 (TLEE…FFRL), 61–82 (RLRK…IQNF), 84–105 (NLVE…IKHL), 107–128 (SLQV…FSQL), 130–152 (NLTV…GSLT), 153–174 (QLES…ISQL), 176–197 (KLKR…LGYL), 199–220 (GLHE…LGLL), 222–243 (KLTY…ISGL), 245–267 (SLTD…AKLS), 268–289 (RLTI…LGNC), 291–312 (NMQE…IGQM), 314–335 (KLNN…IGQC), 337–358 (NLGV…LGNC), 360–382 (VLHV…VNLQ), and 383–403 (LKAV…QPDT). Disordered stretches follow at residues 427-474 (PARD…KDLK), 584-641 (VGGS…VQHL), and 656-719 (SQER…PDNL). Phosphoserine occurs at positions 433 and 435. Residues 438-461 (FEEREPSRTVVKFSEEATQEKETP) show a composition bias toward basic and acidic residues. Residues 471–492 (KDLKAKAQKLKVERSRNEEHAN) adopt a coiled-coil conformation. Acidic residues predominate over residues 589 to 601 (EVQDDDEQEDEFE). The span at 620–639 (RPPKLHRRDTPHHLKNKRVQ) shows a compositional bias: basic residues. Residues 656–672 (SQERNDTTPQHSLSGKV) show a composition bias toward polar residues. The segment covering 676-686 (IEEEEQLEVEQ) has biased composition (acidic residues). The stretch at 677–693 (EEEEQLEVEQEQQQQQQ) forms a coiled coil. Phosphoserine occurs at positions 700, 702, and 705. Residues 731–818 (EIHIERTAAG…VLVLVVQREV (88 aa)) enclose the PDZ 1 domain. A phosphoserine mark is found at Ser-834 and Ser-837. The PDZ 2 domain maps to 929 to 1019 (HTTLIRDQIG…FVRLVLQREY (91 aa)). Ser-1031 and Ser-1041 each carry phosphoserine. Residues 1067–1150 (LATTTPTPKP…EAQPSSLRPL (84 aa)) are disordered. Composition is skewed to polar residues over residues 1080 to 1097 (ASIS…TNGF) and 1132 to 1149 (GSTT…SLRP). PDZ domains are found at residues 1239-1329 (EVVL…QHDP) and 1336-1428 (EVLL…CKGY). The segment covering 1448–1467 (NSSASCSGGSRQGSRASETG) has biased composition (polar residues). The segment at 1448-1485 (NSSASCSGGSRQGSRASETGSELSQSQSVSSLDHEEDE) is disordered. The span at 1468–1478 (SELSQSQSVSS) shows a compositional bias: low complexity. A phosphoserine mark is found at Ser-1475, Ser-1477, and Ser-1478. Position 1599 is a phosphothreonine (Thr-1599). Residues 1647–1669 (AESANSAGAPSPAVPASTPGSAP) are compositionally biased toward low complexity. Disordered regions lie at residues 1647 to 1751 (AESA…KVFS) and 1772 to 1851 (LRRD…VFRS). Residues 1725–1751 (VSDKKRFFESAMEDQHKPTQKTDKVFS) show a composition bias toward basic and acidic residues. Residues 1753–1790 (LSKDEVEKLRQEEERKIATLRRDKNSRLLDAANDNIDK) adopt a coiled-coil conformation. Acidic residues predominate over residues 1807–1816 (DDNDDSDQEE). Over residues 1831-1851 (HFDDAEDMRNPLDEIEAVFRS) the composition is skewed to basic and acidic residues.

Belongs to the LAP (LRR and PDZ) protein family. As to expression, during germ band extension, expression of isoform A occurs predominantly in neuroblasts derived from the neuro-ectoderm and later is restricted to CNS neurons and pole cells. Isoform C is strongly expressed in PNS and a subset of CNS neurons. In the adult, expressed in third antennal segment and maxillary palps, major olfactory organs and in Johnstons organ in the second antennal segment. Expression is also observed in cortical regions of the brain. Isoforms expressed in epithelia are coexpressed with dlg1 throughout development.

It is found in the cytoplasm. It localises to the apicolateral cell membrane. The protein resides in the cell junction. Its subcellular location is the septate junction. Functionally, required for polarization of the embryonic, imaginal disk and follicular epithelia. Specifically restricts apical membrane determinants to the apical cell surface; acts to exclude crb from the basolateral domain and define adherens junction position. Regulates cellular growth and differentiation; acts as a tumor suppressor. Essential for odor guided behavior. The protein is Protein lap4 of Drosophila melanogaster (Fruit fly).